The chain runs to 1689 residues: DNA-directed RNA polymerase I subunit rpa1 (1689 aa).

Positions 63, 66, 73, and 76 each coordinate Zn(2+). A phosphoserine mark is found at Ser-159 and Ser-161. The segment covering 269-280 has biased composition (basic and acidic residues); that stretch reads VLRDTSKKHHED. A disordered region spans residues 269 to 295; sequence VLRDTSKKHHEDEGYDGDSDSSNESEV. Residues 281 to 295 show a composition bias toward acidic residues; the sequence is EGYDGDSDSSNESEV. 3 residues coordinate Mg(2+): Asp-643, Asp-645, and Asp-647. The segment at 1005-1017 is bridging helix; the sequence is PQEYYFHCMAGRE. Residues 1346–1440 are disordered; the sequence is RKSGGKDDTV…EEDEGFKSDE (95 aa). Residues Ser-1438 and Ser-1441 each carry the phosphoserine modification.

Belongs to the RNA polymerase beta' chain family. Component of the RNA polymerase I (Pol I) complex consisting of at least 13 subunits.

The protein localises to the nucleus. Its subcellular location is the nucleolus. It catalyses the reaction RNA(n) + a ribonucleoside 5'-triphosphate = RNA(n+1) + diphosphate. DNA-dependent RNA polymerase catalyzes the transcription of DNA into RNA using the four ribonucleoside triphosphates as substrates. Largest and catalytic core component of RNA polymerase I which synthesizes ribosomal RNA precursors. Forms the polymerase active center together with the second largest subunit. A single stranded DNA template strand of the promoter is positioned within the central active site cleft of Pol I. A bridging helix emanates from RPA1 and crosses the cleft near the catalytic site and is thought to promote translocation of Pol I by acting as a ratchet that moves the RNA-DNA hybrid through the active site by switching from straight to bent conformations at each step of nucleotide addition. The sequence is that of DNA-directed RNA polymerase I subunit rpa1 (rpa1) from Schizosaccharomyces pombe (strain 972 / ATCC 24843) (Fission yeast).